The sequence spans 64 residues: Large ribosomal subunit protein bL35 (64 aa).

Residues 1-42 are compositionally biased toward basic residues; that stretch reads MPKAKTHSGASKRFRRTGTGKIVRQKANRRHLLEHKPTKRTR. A disordered region spans residues 1-64; sequence MPKAKTHSGA…NSRINKLLNG (64 aa). Residues 48–58 are compositionally biased toward polar residues; that stretch reads TTVSAADNSRI.

The protein belongs to the bacterial ribosomal protein bL35 family.

The sequence is that of Large ribosomal subunit protein bL35 from Mycolicibacterium smegmatis (strain ATCC 700084 / mc(2)155) (Mycobacterium smegmatis).